We begin with the raw amino-acid sequence, 452 residues long: UDP-N-acetylmuramate--L-alanine ligase (452 aa).

121-127 (GTHGKTT) is an ATP binding site.

This sequence belongs to the MurCDEF family.

Its subcellular location is the cytoplasm. It carries out the reaction UDP-N-acetyl-alpha-D-muramate + L-alanine + ATP = UDP-N-acetyl-alpha-D-muramoyl-L-alanine + ADP + phosphate + H(+). It functions in the pathway cell wall biogenesis; peptidoglycan biosynthesis. In terms of biological role, cell wall formation. The sequence is that of UDP-N-acetylmuramate--L-alanine ligase from Christiangramia forsetii (strain DSM 17595 / CGMCC 1.15422 / KT0803) (Gramella forsetii).